The following is a 61-amino-acid chain: Protein translocase subunit SecE (61 aa).

Residues 39–59 (LGIILIGLIGMLIRIMGILVL) traverse the membrane as a helical segment.

Belongs to the SecE/SEC61-gamma family. Component of the Sec protein translocase complex. Heterotrimer consisting of SecY (alpha), SecG (beta) and SecE (gamma) subunits. The heterotrimers can form oligomers, although 1 heterotrimer is thought to be able to translocate proteins. Interacts with the ribosome. May interact with SecDF, and other proteins may be involved.

Its subcellular location is the cell membrane. In terms of biological role, essential subunit of the Sec protein translocation channel SecYEG. Clamps together the 2 halves of SecY. May contact the channel plug during translocation. The polypeptide is Protein translocase subunit SecE (Pyrococcus abyssi (strain GE5 / Orsay)).